The chain runs to 467 residues: Protein CitXG (467 aa).

Positions 1–178 (MDYFEGGERL…NKMLHNFEKS (178 aa)) are apo-citrate lyase phosphoribosyl-dephospho-CoA transferase. Residues 179–467 (KMIVPQMTQS…IFLARLVGSL (289 aa)) are 2-(5''-triphosphoribosyl)-3'-dephosphocoenzyme-A synthase.

In the N-terminal section; belongs to the CitX family. The protein in the C-terminal section; belongs to the CitG/MdcB family.

The catalysed reaction is apo-[citrate lyase ACP] + 2'-(5''-triphospho-alpha-D-ribosyl)-3'-dephospho-CoA = holo-[citrate lyase ACP] + diphosphate. It carries out the reaction 3'-dephospho-CoA + ATP = 2'-(5''-triphospho-alpha-D-ribosyl)-3'-dephospho-CoA + adenine. Its function is as follows. Bifunctional enzyme that catalyzes formation of 2-(5''-triphosphoribosyl)-3'-dephosphocoenzyme-A, and then the transfer of this prosthetic group precursor to the apo-acyl carrier protein (gamma chain) of the citrate lyase to yield the holo-acyl carrier protein. The protein is Protein CitXG (citXG) of Leuconostoc mesenteroides subsp. cremoris.